Consider the following 309-residue polypeptide: ATP synthase gamma chain (309 aa).

This sequence belongs to the ATPase gamma chain family. As to quaternary structure, F-type ATPases have 2 components, CF(1) - the catalytic core - and CF(0) - the membrane proton channel. CF(1) has five subunits: alpha(3), beta(3), gamma(1), delta(1), epsilon(1). CF(0) has three main subunits: a, b and c.

It localises to the cell membrane. In terms of biological role, produces ATP from ADP in the presence of a proton gradient across the membrane. The gamma chain is believed to be important in regulating ATPase activity and the flow of protons through the CF(0) complex. This is ATP synthase gamma chain from Mycolicibacterium vanbaalenii (strain DSM 7251 / JCM 13017 / BCRC 16820 / KCTC 9966 / NRRL B-24157 / PYR-1) (Mycobacterium vanbaalenii).